The primary structure comprises 334 residues: N-acetylmuramate/N-acetylglucosamine kinase (334 aa).

The protein belongs to the kinase AmgK family.

It catalyses the reaction N-acetyl-D-muramate + ATP = N-acetyl-alpha-D-muramate 1-phosphate + ADP + H(+). The enzyme catalyses N-acetyl-D-glucosamine + ATP = N-acetyl-alpha-D-glucosamine 1-phosphate + ADP + H(+). The protein operates within cell wall biogenesis; peptidoglycan recycling. Its function is as follows. Sugar kinase that catalyzes the ATP-dependent phosphorylation of N-acetylmuramate (MurNAc) and N-acetylglucosamine (GlcNAc) at its C1 hydroxyl group, leading to MurNAc alpha-1P and GlcNAc alpha-1P, respectively. Is likely involved in peptidoglycan recycling as part of a cell wall recycling pathway that bypasses de novo biosynthesis of the peptidoglycan precursor UDP-MurNAc. Is able to complement the fosfomycin sensitivity phenotype of a P.putida mutant lacking amgK. In Neisseria meningitidis serogroup B (strain ATCC BAA-335 / MC58), this protein is N-acetylmuramate/N-acetylglucosamine kinase.